The sequence spans 318 residues: NADH-ubiquinone oxidoreductase chain 1 (318 aa).

8 helical membrane passes run 3–23, 70–90, 100–120, 146–166, 171–191, 222–242, 254–273, and 294–314; these read LITL…LTLV, MFII…TPLP, LGIL…LWSG, LAII…TTLI, YIWL…STLA, LFFL…TILF, LYTT…FLWI, and LPLT…LASI.

This sequence belongs to the complex I subunit 1 family.

It localises to the mitochondrion inner membrane. It catalyses the reaction a ubiquinone + NADH + 5 H(+)(in) = a ubiquinol + NAD(+) + 4 H(+)(out). Its function is as follows. Core subunit of the mitochondrial membrane respiratory chain NADH dehydrogenase (Complex I) that is believed to belong to the minimal assembly required for catalysis. Complex I functions in the transfer of electrons from NADH to the respiratory chain. The immediate electron acceptor for the enzyme is believed to be ubiquinone. The polypeptide is NADH-ubiquinone oxidoreductase chain 1 (MT-ND1) (Phyllostomus elongatus (Lesser spear-nosed bat)).